Reading from the N-terminus, the 209-residue chain is MPKTMGILGKNIGMTRVYGEVGQAIPVTVVQAGPCKVLQVKTNATDGYNAVQVGFENKKSSRVNKAEAGHFAKSDSEGFYFVREFRVVDPATYNVGDMISVDALFKAGDIVDVQGTSKGRGFQGVIKRWGFKGGPGGHGSKHHRAPGSIGCSAYPGRVVKGKKMPGRMGNDTVLKKNVTVVDVRIDENVVLLKGPMPGAKNGLLKIYSK.

It belongs to the universal ribosomal protein uL3 family. As to quaternary structure, part of the 50S ribosomal subunit. Forms a cluster with proteins L14 and L19.

Functionally, one of the primary rRNA binding proteins, it binds directly near the 3'-end of the 23S rRNA, where it nucleates assembly of the 50S subunit. This chain is Large ribosomal subunit protein uL3, found in Desulfotalea psychrophila (strain LSv54 / DSM 12343).